A 152-amino-acid polypeptide reads, in one-letter code: Superoxide dismutase [Cu-Zn] 2 (152 aa).

Cu cation contacts are provided by histidine 45, histidine 47, and histidine 62. The disordered stretch occupies residues 53 to 81 (TNGSMSTGPHFNPDGKQHGAPEDANRHAG). Residues histidine 62, histidine 70, histidine 79, and aspartate 82 each contribute to the Zn(2+) site. The segment covering 65-81 (PDGKQHGAPEDANRHAG) has biased composition (basic and acidic residues). Histidine 119 is a binding site for Cu cation.

Belongs to the Cu-Zn superoxide dismutase family. In terms of assembly, homodimer. The cofactor is Cu cation. It depends on Zn(2+) as a cofactor.

It is found in the cytoplasm. The catalysed reaction is 2 superoxide + 2 H(+) = H2O2 + O2. Functionally, destroys radicals which are normally produced within the cells and which are toxic to biological systems. The chain is Superoxide dismutase [Cu-Zn] 2 (SODCC2) from Brassica juncea (Indian mustard).